An 88-amino-acid chain; its full sequence is Small ribosomal subunit protein uS15 (88 aa).

This sequence belongs to the universal ribosomal protein uS15 family. As to quaternary structure, part of the 30S ribosomal subunit. Forms a bridge to the 50S subunit in the 70S ribosome, contacting the 23S rRNA.

One of the primary rRNA binding proteins, it binds directly to 16S rRNA where it helps nucleate assembly of the platform of the 30S subunit by binding and bridging several RNA helices of the 16S rRNA. In terms of biological role, forms an intersubunit bridge (bridge B4) with the 23S rRNA of the 50S subunit in the ribosome. This chain is Small ribosomal subunit protein uS15, found in Sorangium cellulosum (strain So ce56) (Polyangium cellulosum (strain So ce56)).